The following is a 504-amino-acid chain: Maturase K (504 aa).

This sequence belongs to the intron maturase 2 family. MatK subfamily.

It localises to the plastid. It is found in the chloroplast. Functionally, usually encoded in the trnK tRNA gene intron. Probably assists in splicing its own and other chloroplast group II introns. In Lablab purpureus (Hyacinth bean), this protein is Maturase K.